A 518-amino-acid polypeptide reads, in one-letter code: 2-isopropylmalate synthase (518 aa).

A Pyruvate carboxyltransferase domain is found at 5–267 (VIIFDTTLRD…STNIKHKEIY (263 aa)). Mn(2+) contacts are provided by aspartate 14, histidine 202, histidine 204, and asparagine 238. A regulatory domain region spans residues 392-518 (SLSFFSVQSI…KLKTLKKVNN (127 aa)).

This sequence belongs to the alpha-IPM synthase/homocitrate synthase family. LeuA type 1 subfamily. Homodimer. The cofactor is Mn(2+).

Its subcellular location is the cytoplasm. The enzyme catalyses 3-methyl-2-oxobutanoate + acetyl-CoA + H2O = (2S)-2-isopropylmalate + CoA + H(+). It functions in the pathway amino-acid biosynthesis; L-leucine biosynthesis; L-leucine from 3-methyl-2-oxobutanoate: step 1/4. Functionally, catalyzes the condensation of the acetyl group of acetyl-CoA with 3-methyl-2-oxobutanoate (2-ketoisovalerate) to form 3-carboxy-3-hydroxy-4-methylpentanoate (2-isopropylmalate). In Buchnera aphidicola subsp. Schizaphis graminum (strain Sg), this protein is 2-isopropylmalate synthase.